A 207-amino-acid polypeptide reads, in one-letter code: Ion-translocating oxidoreductase complex subunit G (207 aa).

Residues 11 to 31 traverse the membrane as a helical segment; it reads GILLGFIALLCTIISAGIYFL. T175 carries the post-translational modification FMN phosphoryl threonine.

Belongs to the RnfG family. In terms of assembly, the complex is composed of six subunits: RnfA, RnfB, RnfC, RnfD, RnfE and RnfG. It depends on FMN as a cofactor.

It localises to the cell inner membrane. Part of a membrane-bound complex that couples electron transfer with translocation of ions across the membrane. The polypeptide is Ion-translocating oxidoreductase complex subunit G (Haemophilus influenzae (strain PittEE)).